Consider the following 324-residue polypeptide: DNA primase small subunit PriS (324 aa).

Active-site residues include aspartate 94, aspartate 96, and aspartate 274.

It belongs to the eukaryotic-type primase small subunit family. Heterodimer of a small subunit (PriS) and a large subunit (PriL). The cofactor is Mg(2+). Mn(2+) serves as cofactor.

In terms of biological role, catalytic subunit of DNA primase, an RNA polymerase that catalyzes the synthesis of short RNA molecules used as primers for DNA polymerase during DNA replication. The small subunit contains the primase catalytic core and has DNA synthesis activity on its own. Binding to the large subunit stabilizes and modulates the activity, increasing the rate of DNA synthesis while decreasing the length of the DNA fragments, and conferring RNA synthesis capability. The DNA polymerase activity may enable DNA primase to also catalyze primer extension after primer synthesis. May also play a role in DNA repair. In Methanobrevibacter smithii (strain ATCC 35061 / DSM 861 / OCM 144 / PS), this protein is DNA primase small subunit PriS.